Consider the following 175-residue polypeptide: Epididymal-specific lipocalin-8 (175 aa).

The first 25 residues, 1–25 (MPGAAEALPTVTVTLVAGAVPPASG), serve as a signal peptide directing secretion. 2 N-linked (GlcNAc...) asparagine glycosylation sites follow: Asn66 and Asn74. Cys79 and Cys166 are joined by a disulfide.

Belongs to the calycin superfamily. Lipocalin family.

It is found in the secreted. In terms of biological role, may play a role in male fertility. May act as a retinoid carrier protein within the epididymis. In Homo sapiens (Human), this protein is Epididymal-specific lipocalin-8 (LCN8).